The following is a 29-amino-acid chain: Beta-theraphotoxin-Gr1b (29 aa).

3 disulfide bridges follow: C2-C16, C9-C21, and C15-C25. Residue L29 is modified to Leucine amide.

This sequence belongs to the neurotoxin 30 (phrixotoxin) family. In terms of tissue distribution, expressed by the venom gland.

The protein localises to the secreted. In terms of biological role, inhibits the voltage-gated sodium channels Nav1.1/SCN1A (IC(50)=360 nM), Nav1.2/SCN2A (IC(50)=600 nM), Nav1.3/SCN3A (IC(50)=1280), Nav1.4/SCN4A (IC(50)=330 nM), Nav1.6/SCN8A (IC(50)=1200 nM), Nav1.7/SCN9A (IC(50)=1-40 nM), and voltage-gated potassium channels Kv11.1/KCNH2 (IC(50)=4.8 uM). Induces analgesia in mammals. This analgesia is mediated by a non-opioid receptor related mechanism. This chain is Beta-theraphotoxin-Gr1b, found in Grammostola rosea (Chilean rose tarantula).